The sequence spans 179 residues: uncharacterized protein (179 aa).

The stretch at 139-172 forms a coiled coil; that stretch reads IEDLGKYIKSDRIEKEALREELEKILNTLVKHLE.

This is an uncharacterized protein from Methanocaldococcus jannaschii (strain ATCC 43067 / DSM 2661 / JAL-1 / JCM 10045 / NBRC 100440) (Methanococcus jannaschii).